The following is a 95-amino-acid chain: Aspartyl/glutamyl-tRNA(Asn/Gln) amidotransferase subunit C (95 aa).

It belongs to the GatC family. In terms of assembly, heterotrimer of A, B and C subunits.

It catalyses the reaction L-glutamyl-tRNA(Gln) + L-glutamine + ATP + H2O = L-glutaminyl-tRNA(Gln) + L-glutamate + ADP + phosphate + H(+). The catalysed reaction is L-aspartyl-tRNA(Asn) + L-glutamine + ATP + H2O = L-asparaginyl-tRNA(Asn) + L-glutamate + ADP + phosphate + 2 H(+). Functionally, allows the formation of correctly charged Asn-tRNA(Asn) or Gln-tRNA(Gln) through the transamidation of misacylated Asp-tRNA(Asn) or Glu-tRNA(Gln) in organisms which lack either or both of asparaginyl-tRNA or glutaminyl-tRNA synthetases. The reaction takes place in the presence of glutamine and ATP through an activated phospho-Asp-tRNA(Asn) or phospho-Glu-tRNA(Gln). The protein is Aspartyl/glutamyl-tRNA(Asn/Gln) amidotransferase subunit C of Ruegeria pomeroyi (strain ATCC 700808 / DSM 15171 / DSS-3) (Silicibacter pomeroyi).